Reading from the N-terminus, the 536-residue chain is Glutamyl-tRNA(Gln) amidotransferase subunit B, mitochondrial (536 aa).

A mitochondrion-targeting transit peptide spans 1–8 (MLRVHRLY).

Belongs to the GatB/GatE family. GatB subfamily. As to quaternary structure, subunit of the heterotrimeric GatFAB amidotransferase (AdT) complex, composed of A, B and F subunits.

Its subcellular location is the mitochondrion. The enzyme catalyses L-glutamyl-tRNA(Gln) + L-glutamine + ATP + H2O = L-glutaminyl-tRNA(Gln) + L-glutamate + ADP + phosphate + H(+). Its function is as follows. Allows the formation of correctly charged Gln-tRNA(Gln) through the transamidation of misacylated Glu-tRNA(Gln) in the mitochondria. The reaction takes place in the presence of glutamine and ATP through an activated gamma-phospho-Glu-tRNA(Gln). The polypeptide is Glutamyl-tRNA(Gln) amidotransferase subunit B, mitochondrial (Eremothecium gossypii (strain ATCC 10895 / CBS 109.51 / FGSC 9923 / NRRL Y-1056) (Yeast)).